The sequence spans 298 residues: Acetylglutamate kinase (298 aa).

Residues 66 to 67 (GG), Arg88, and Asn193 contribute to the substrate site.

The protein belongs to the acetylglutamate kinase family. ArgB subfamily.

It is found in the cytoplasm. The enzyme catalyses N-acetyl-L-glutamate + ATP = N-acetyl-L-glutamyl 5-phosphate + ADP. Its pathway is amino-acid biosynthesis; L-arginine biosynthesis; N(2)-acetyl-L-ornithine from L-glutamate: step 2/4. Its function is as follows. Catalyzes the ATP-dependent phosphorylation of N-acetyl-L-glutamate. This chain is Acetylglutamate kinase, found in Methanosphaera stadtmanae (strain ATCC 43021 / DSM 3091 / JCM 11832 / MCB-3).